The following is a 449-amino-acid chain: Telomere resolvase ResT (449 aa).

No cofactors were found to be necessary. is required as a cofactor.

The protein resides in the cytoplasm. It localises to the nucleoid. Catalyzes the conservative, sequence-specific DNA breakage and reunion reaction that generates two hairpin telomeres from a replicated telomere substrate. Breaks two phosphodiester bonds in a single DNA duplex and joins each end with the opposite DNA strand to form covalently closed hairpin telomeres. In vitro relaxed-circular, open-circular and linearized plasmids, but not supercoiled DNA, are all substrates. Cleavage is position-dependent relative to conserved sequence elements. This is Telomere resolvase ResT from Borreliella burgdorferi (strain ATCC 35210 / DSM 4680 / CIP 102532 / B31) (Borrelia burgdorferi).